The primary structure comprises 153 residues: NAD(P)H-quinone oxidoreductase subunit N (153 aa).

Belongs to the complex I NdhN subunit family. In terms of assembly, NDH-1 can be composed of about 15 different subunits; different subcomplexes with different compositions have been identified which probably have different functions.

It localises to the cellular thylakoid membrane. It carries out the reaction a plastoquinone + NADH + (n+1) H(+)(in) = a plastoquinol + NAD(+) + n H(+)(out). The enzyme catalyses a plastoquinone + NADPH + (n+1) H(+)(in) = a plastoquinol + NADP(+) + n H(+)(out). Functionally, NDH-1 shuttles electrons from an unknown electron donor, via FMN and iron-sulfur (Fe-S) centers, to quinones in the respiratory and/or the photosynthetic chain. The immediate electron acceptor for the enzyme in this species is believed to be plastoquinone. Couples the redox reaction to proton translocation, and thus conserves the redox energy in a proton gradient. Cyanobacterial NDH-1 also plays a role in inorganic carbon-concentration. In Prochlorococcus marinus (strain MIT 9313), this protein is NAD(P)H-quinone oxidoreductase subunit N.